Consider the following 101-residue polypeptide: MMLEHVLILSAYLFSIGIYGLITSRNMVRALMCLELILNAVNMNLIKFSDLFDSRQLKGDIFSIFVIAIAAAEAAIGPAIVSSIHRNRKSTRINQSNLLNK.

The next 3 membrane-spanning stretches (helical) occupy residues 2-22 (MLEHVLILSAYLFSIGIYGLI), 27-46 (MVRALMCLELILNAVNMNLI), and 61-81 (IFSIFVIAIAAAEAAIGPAIV).

It belongs to the complex I subunit 4L family. As to quaternary structure, NDH is composed of at least 16 different subunits, 5 of which are encoded in the nucleus.

The protein resides in the plastid. The protein localises to the chloroplast thylakoid membrane. It catalyses the reaction a plastoquinone + NADH + (n+1) H(+)(in) = a plastoquinol + NAD(+) + n H(+)(out). The enzyme catalyses a plastoquinone + NADPH + (n+1) H(+)(in) = a plastoquinol + NADP(+) + n H(+)(out). Functionally, NDH shuttles electrons from NAD(P)H:plastoquinone, via FMN and iron-sulfur (Fe-S) centers, to quinones in the photosynthetic chain and possibly in a chloroplast respiratory chain. The immediate electron acceptor for the enzyme in this species is believed to be plastoquinone. Couples the redox reaction to proton translocation, and thus conserves the redox energy in a proton gradient. This is NAD(P)H-quinone oxidoreductase subunit 4L, chloroplastic from Drimys granadensis.